The following is a 269-amino-acid chain: Phosphate import ATP-binding protein PstB 2 (269 aa).

The ABC transporter domain maps to 22–264 (LSTNDLRVFY…PSLQSTEDYV (243 aa)). 55–62 (GPSGSGKS) serves as a coordination point for ATP.

The protein belongs to the ABC transporter superfamily. Phosphate importer (TC 3.A.1.7) family. In terms of assembly, the complex is composed of two ATP-binding proteins (PstB), two transmembrane proteins (PstC and PstA) and a solute-binding protein (PstS).

Its subcellular location is the cell membrane. It catalyses the reaction phosphate(out) + ATP + H2O = ADP + 2 phosphate(in) + H(+). Functionally, part of the ABC transporter complex PstSACB involved in phosphate import. Responsible for energy coupling to the transport system. In Lactococcus lactis subsp. lactis (strain IL1403) (Streptococcus lactis), this protein is Phosphate import ATP-binding protein PstB 2.